We begin with the raw amino-acid sequence, 312 residues long: Malate dehydrogenase (312 aa).

NAD(+)-binding positions include 7–13 (GAAGGIG) and Asp34. 2 residues coordinate substrate: Arg81 and Arg87. NAD(+)-binding positions include Asn94 and 117-119 (ITN). Substrate is bound by residues Asn119 and Arg153. The Proton acceptor role is filled by His177. Met227 provides a ligand contact to NAD(+).

This sequence belongs to the LDH/MDH superfamily. MDH type 1 family. In terms of assembly, homodimer.

It catalyses the reaction (S)-malate + NAD(+) = oxaloacetate + NADH + H(+). Its function is as follows. Catalyzes the reversible oxidation of malate to oxaloacetate. The protein is Malate dehydrogenase of Salmonella dublin (strain CT_02021853).